The following is a 1042-amino-acid chain: Isoleucine--tRNA ligase (1042 aa).

A 'HIGH' region motif is present at residues 48 to 58 (PFATGLPHFGH). The short motif at 594-598 (KMSKS) is the 'KMSKS' region element. K597 provides a ligand contact to ATP.

It belongs to the class-I aminoacyl-tRNA synthetase family. IleS type 2 subfamily. Monomer. Requires Zn(2+) as cofactor.

It is found in the cytoplasm. The enzyme catalyses tRNA(Ile) + L-isoleucine + ATP = L-isoleucyl-tRNA(Ile) + AMP + diphosphate. Its function is as follows. Catalyzes the attachment of isoleucine to tRNA(Ile). As IleRS can inadvertently accommodate and process structurally similar amino acids such as valine, to avoid such errors it has two additional distinct tRNA(Ile)-dependent editing activities. One activity is designated as 'pretransfer' editing and involves the hydrolysis of activated Val-AMP. The other activity is designated 'posttransfer' editing and involves deacylation of mischarged Val-tRNA(Ile). In Borreliella afzelii (strain PKo) (Borrelia afzelii), this protein is Isoleucine--tRNA ligase.